The chain runs to 347 residues: Extracellular exo-alpha-(1-&gt;5)-L-arabinofuranosidase ArbA (347 aa).

The N-terminal stretch at 1 to 31 (MPTHHPITRQHWHHSWLSALALLCASLACGA) is a signal peptide. D35 is a substrate binding site. Catalysis depends on D38, which acts as the Proton acceptor. Substrate contacts are provided by residues 90–92 (DGH), 115–116 (GK), N155, S175, and E221. The active-site Proton donor is E221. Residue H291 coordinates Ca(2+). Q316 is a substrate binding site.

The protein belongs to the glycosyl hydrolase 43 family. Homodimer.

It localises to the secreted. It catalyses the reaction Hydrolysis of terminal non-reducing alpha-L-arabinofuranoside residues in alpha-L-arabinosides.. It functions in the pathway glycan metabolism; L-arabinan degradation. Its function is as follows. Involved in the degradation of arabinan and is a key enzyme in the complete degradation of the plant cell wall. Catalyzes the cleavage of the terminal alpha-(1-&gt;5)-arabinofuranosyl bonds of linear arabinan and carboxymethylarabinan to produce almost exclusively arabinotriose. The polypeptide is Extracellular exo-alpha-(1-&gt;5)-L-arabinofuranosidase ArbA (arbA) (Cellvibrio japonicus (strain Ueda107) (Pseudomonas fluorescens subsp. cellulosa)).